The following is a 439-amino-acid chain: tRNA modification GTPase MnmE (439 aa).

(6S)-5-formyl-5,6,7,8-tetrahydrofolate-binding residues include Arg-20, Glu-78, and Lys-116. The 154-residue stretch at Gly-211–Glu-364 folds into the TrmE-type G domain. GTP contacts are provided by residues Asn-221–Thr-226, Ser-240–Thr-246, and Asp-265–Gly-268. 2 residues coordinate Mg(2+): Ser-225 and Thr-246. Lys-439 provides a ligand contact to (6S)-5-formyl-5,6,7,8-tetrahydrofolate.

It belongs to the TRAFAC class TrmE-Era-EngA-EngB-Septin-like GTPase superfamily. TrmE GTPase family. Homodimer. Heterotetramer of two MnmE and two MnmG subunits. The cofactor is K(+).

The protein resides in the cytoplasm. Functionally, exhibits a very high intrinsic GTPase hydrolysis rate. Involved in the addition of a carboxymethylaminomethyl (cmnm) group at the wobble position (U34) of certain tRNAs, forming tRNA-cmnm(5)s(2)U34. The polypeptide is tRNA modification GTPase MnmE (Ehrlichia ruminantium (strain Welgevonden)).